A 523-amino-acid polypeptide reads, in one-letter code: Calcium and calcium/calmodulin-dependent serine/threonine-protein kinase DMI-3 (523 aa).

The Protein kinase domain maps to 12-306 (YEVSEILGRG…ALELLSDPWV (295 aa)). ATP contacts are provided by residues 18 to 26 (LGRGGFSVV) and K47. The active-site Proton acceptor is the D171. At T271 the chain carries Phosphothreonine. The interval 329–342 (ARRKLRAAAIASVW) is calmodulin-binding. EF-hand domains lie at 400–435 (SLIP…LKNS), 436–471 (KGED…LPYD), and 478–513 (TEPG…DSSL). The Ca(2+) site is built by D413, N415, D417, T419, E424, D449, D451, S453, C455, E460, D491, N493, D495, K497, and E502.

This sequence belongs to the protein kinase superfamily. CAMK Ser/Thr protein kinase family. CaMK subfamily. As to quaternary structure, interacts with IPD3. Autophosphorylation. In terms of tissue distribution, highly expressed in roots. Expressed in root hairs and nodules. Expressed at low levels in flowers. Not detected in leaves or stems.

It localises to the nucleus. It catalyses the reaction L-seryl-[protein] + ATP = O-phospho-L-seryl-[protein] + ADP + H(+). The catalysed reaction is L-threonyl-[protein] + ATP = O-phospho-L-threonyl-[protein] + ADP + H(+). With respect to regulation, activated by calcium. Autophosphorylation may play an important role in the regulation of the kinase activity. Its function is as follows. During nodulation, plays a central role in bacterial infection and contributes to nodule organogenesis. Protein kinase that recognizes the calcium spiking induced by Nod factors and translates this signal to components controlling nodulation and mycorrhizal infection responses. May phosphorylate the NSP1 protein. Required in epidermal and cortical cells to promote infection thread (IT) formation in root hairs. This Medicago truncatula (Barrel medic) protein is Calcium and calcium/calmodulin-dependent serine/threonine-protein kinase DMI-3.